The following is a 156-amino-acid chain: ATP synthase subunit b (156 aa).

The helical transmembrane segment at 7–29 (LIGQSITFIFFVWFSMKFVWPPI) threads the bilayer.

Belongs to the ATPase B chain family. As to quaternary structure, F-type ATPases have 2 components, F(1) - the catalytic core - and F(0) - the membrane proton channel. F(1) has five subunits: alpha(3), beta(3), gamma(1), delta(1), epsilon(1). F(0) has three main subunits: a(1), b(2) and c(10-14). The alpha and beta chains form an alternating ring which encloses part of the gamma chain. F(1) is attached to F(0) by a central stalk formed by the gamma and epsilon chains, while a peripheral stalk is formed by the delta and b chains.

The protein localises to the cell inner membrane. F(1)F(0) ATP synthase produces ATP from ADP in the presence of a proton or sodium gradient. F-type ATPases consist of two structural domains, F(1) containing the extramembraneous catalytic core and F(0) containing the membrane proton channel, linked together by a central stalk and a peripheral stalk. During catalysis, ATP synthesis in the catalytic domain of F(1) is coupled via a rotary mechanism of the central stalk subunits to proton translocation. Its function is as follows. Component of the F(0) channel, it forms part of the peripheral stalk, linking F(1) to F(0). This chain is ATP synthase subunit b, found in Thiobacillus denitrificans (strain ATCC 25259 / T1).